Reading from the N-terminus, the 473-residue chain is Aspartyl/glutamyl-tRNA(Asn/Gln) amidotransferase subunit B (473 aa).

This sequence belongs to the GatB/GatE family. GatB subfamily. Heterotrimer of A, B and C subunits.

It carries out the reaction L-glutamyl-tRNA(Gln) + L-glutamine + ATP + H2O = L-glutaminyl-tRNA(Gln) + L-glutamate + ADP + phosphate + H(+). The enzyme catalyses L-aspartyl-tRNA(Asn) + L-glutamine + ATP + H2O = L-asparaginyl-tRNA(Asn) + L-glutamate + ADP + phosphate + 2 H(+). Allows the formation of correctly charged Asn-tRNA(Asn) or Gln-tRNA(Gln) through the transamidation of misacylated Asp-tRNA(Asn) or Glu-tRNA(Gln) in organisms which lack either or both of asparaginyl-tRNA or glutaminyl-tRNA synthetases. The reaction takes place in the presence of glutamine and ATP through an activated phospho-Asp-tRNA(Asn) or phospho-Glu-tRNA(Gln). The protein is Aspartyl/glutamyl-tRNA(Asn/Gln) amidotransferase subunit B of Francisella tularensis subsp. novicida (strain U112).